A 167-amino-acid polypeptide reads, in one-letter code: NADH-quinone oxidoreductase subunit B (167 aa).

[4Fe-4S] cluster is bound by residues Cys-40, Cys-41, Cys-105, and Cys-135.

Belongs to the complex I 20 kDa subunit family. In terms of assembly, NDH-1 is composed of 14 different subunits. Subunits NuoB, C, D, E, F, and G constitute the peripheral sector of the complex. The cofactor is [4Fe-4S] cluster.

Its subcellular location is the cell inner membrane. The catalysed reaction is a quinone + NADH + 5 H(+)(in) = a quinol + NAD(+) + 4 H(+)(out). Functionally, NDH-1 shuttles electrons from NADH, via FMN and iron-sulfur (Fe-S) centers, to quinones in the respiratory chain. The immediate electron acceptor for the enzyme in this species is believed to be ubiquinone. Couples the redox reaction to proton translocation (for every two electrons transferred, four hydrogen ions are translocated across the cytoplasmic membrane), and thus conserves the redox energy in a proton gradient. This Magnetococcus marinus (strain ATCC BAA-1437 / JCM 17883 / MC-1) protein is NADH-quinone oxidoreductase subunit B.